We begin with the raw amino-acid sequence, 375 residues long: Actin (375 aa).

It belongs to the actin family.

The protein localises to the cytoplasm. It localises to the cytoskeleton. The enzyme catalyses ATP + H2O = ADP + phosphate + H(+). Actins are highly conserved proteins that are involved in various types of cell motility and are ubiquitously expressed in all eukaryotic cells. In Giardia intestinalis (Giardia lamblia), this protein is Actin.